Reading from the N-terminus, the 354-residue chain is Methylthioribose-1-phosphate isomerase (354 aa).

Substrate is bound by residues 54 to 56 (RGA), arginine 97, and glutamine 204. Residue aspartate 245 is the Proton donor of the active site. Substrate is bound at residue 255 to 256 (NK).

It belongs to the eIF-2B alpha/beta/delta subunits family. MtnA subfamily.

It catalyses the reaction 5-(methylsulfanyl)-alpha-D-ribose 1-phosphate = 5-(methylsulfanyl)-D-ribulose 1-phosphate. It participates in amino-acid biosynthesis; L-methionine biosynthesis via salvage pathway; L-methionine from S-methyl-5-thio-alpha-D-ribose 1-phosphate: step 1/6. Functionally, catalyzes the interconversion of methylthioribose-1-phosphate (MTR-1-P) into methylthioribulose-1-phosphate (MTRu-1-P). The polypeptide is Methylthioribose-1-phosphate isomerase (Albidiferax ferrireducens (strain ATCC BAA-621 / DSM 15236 / T118) (Rhodoferax ferrireducens)).